The chain runs to 545 residues: POTE ankyrin domain family member H (545 aa).

7 ANK repeats span residues 180–208 (LHRA…KKDK), 209–238 (QKRT…QLNI), 242–271 (KKRT…DPNI), 275–304 (YGNT…DIES), 308–337 (HGLT…NLNA), 341–370 (YGRT…DVSS), and 374–404 (SGQT…QILK). The disordered stretch occupies residues 406–524 (SSENSNPEQD…KQLSEEQNTG (119 aa)). Basic and acidic residues-rich tracts occupy residues 414-429 (QDLK…RLKG) and 443-458 (EINK…EMKK). The segment covering 513–524 (TQKQLSEEQNTG) has biased composition (polar residues).

Belongs to the POTE family.

In Homo sapiens (Human), this protein is POTE ankyrin domain family member H (POTEH).